The chain runs to 259 residues: 4-hydroxy-tetrahydrodipicolinate reductase (259 aa).

Residue 9-14 (GANGRM) participates in NAD(+) binding. An NADP(+)-binding site is contributed by Arg37. NAD(+)-binding positions include 92 to 94 (GTT) and 116 to 119 (ASNM). His149 (proton donor/acceptor) is an active-site residue. His150 contributes to the (S)-2,3,4,5-tetrahydrodipicolinate binding site. Lys153 (proton donor) is an active-site residue. 159-160 (GT) lines the (S)-2,3,4,5-tetrahydrodipicolinate pocket.

Belongs to the DapB family.

It localises to the cytoplasm. The enzyme catalyses (S)-2,3,4,5-tetrahydrodipicolinate + NAD(+) + H2O = (2S,4S)-4-hydroxy-2,3,4,5-tetrahydrodipicolinate + NADH + H(+). It carries out the reaction (S)-2,3,4,5-tetrahydrodipicolinate + NADP(+) + H2O = (2S,4S)-4-hydroxy-2,3,4,5-tetrahydrodipicolinate + NADPH + H(+). Its pathway is amino-acid biosynthesis; L-lysine biosynthesis via DAP pathway; (S)-tetrahydrodipicolinate from L-aspartate: step 4/4. Its function is as follows. Catalyzes the conversion of 4-hydroxy-tetrahydrodipicolinate (HTPA) to tetrahydrodipicolinate. This Desulfovibrio desulfuricans (strain ATCC 27774 / DSM 6949 / MB) protein is 4-hydroxy-tetrahydrodipicolinate reductase.